A 211-amino-acid chain; its full sequence is Transcriptional regulator NarO (211 aa).

The HTH bat-type domain occupies 154-205; that stretch reads LTARQREVLETAHEMGYFEHPREANATEVAAALDINRSTFTEHLSAAQSKLL.

Activates transcription of the denitrifying genes (nitrate reductase narA and nitrite reductase nirK) under anaerobic conditions. The chain is Transcriptional regulator NarO from Haloferax volcanii (strain ATCC 29605 / DSM 3757 / JCM 8879 / NBRC 14742 / NCIMB 2012 / VKM B-1768 / DS2) (Halobacterium volcanii).